The following is a 1398-amino-acid chain: Disease resistance protein RPV1 (1398 aa).

Residues 22 to 185 (TTYDVFLSFR…EITNSIFRQL (164 aa)) enclose the TIR domain. NAD(+) is bound by residues 31 to 36 (RGEDTR) and Gly-63. The active site involves Glu-97. The NB-ARC domain occupies 201-440 (SHVKEMILRL…KRSYDGLDRI (240 aa)). LRR repeat units follow at residues 203–225 (VKEM…IYGV), 423–447 (KADI…IFLD), 478–504 (LNDL…GWEI), 535–560 (IKSV…VFAK), 610–632 (SYEL…NFDG), 633–657 (GKLV…DLER), 678–702 (MPNL…VGNM), 703–726 (KKLT…IGDL), 728–750 (SLES…GGNM), 751–773 (KSLT…IGDL), 775–797 (SLES…GGNM), 798–820 (KSLT…IGDL), 822–844 (SLEI…GGNM), 845–867 (KSLK…IGDL), 869–891 (SLKY…GGNM), 892–914 (KRLL…IGDL), 916–938 (SLKY…GGNM), 939–961 (KSLT…IGDL), 963–985 (SLEI…GGNM), 986–1008 (KSLK…IGDL), 1010–1032 (SLKY…GGNM), 1033–1055 (KSLL…IGDL), 1079–1102 (MKSL…IGDL), and 1105–1128 (LEML…AIDA). The segment covering 1315-1328 (QNSGDNGSALQDAN) has biased composition (polar residues). The segment at 1315–1336 (QNSGDNGSALQDANGNVHGANQ) is disordered. The stretch at 1346–1369 (LDLLRNLSLGDNGSVVLEDTLGNR) is one LRR 25 repeat. The Nuclear localization signal signature appears at 1369 to 1373 (RKRRR).

The protein belongs to the disease resistance TIR-NB-LRR family. Homodimer; homodimerization is required for NAD(+) hydrolase (NADase) activity.

The protein localises to the nucleus. It localises to the cytoplasm. The enzyme catalyses NAD(+) + H2O = ADP-D-ribose + nicotinamide + H(+). Functionally, disease resistance (R) protein that confers resistance to multiple powdery and downy mildew by promoting cell death. Acts as a NAD(+) hydrolase (NADase): in response to activation, catalyzes cleavage of NAD(+) into ADP-D-ribose (ADPR) and nicotinamide; NAD(+) cleavage triggering a defense system that promotes cell death. The sequence is that of Disease resistance protein RPV1 from Vitis rotundifolia (Muscadine grape).